A 300-amino-acid chain; its full sequence is Ribosomal protein L11 methyltransferase (300 aa).

Residues T152, G173, D195, and N234 each coordinate S-adenosyl-L-methionine.

This sequence belongs to the methyltransferase superfamily. PrmA family.

It localises to the cytoplasm. The catalysed reaction is L-lysyl-[protein] + 3 S-adenosyl-L-methionine = N(6),N(6),N(6)-trimethyl-L-lysyl-[protein] + 3 S-adenosyl-L-homocysteine + 3 H(+). In terms of biological role, methylates ribosomal protein L11. This is Ribosomal protein L11 methyltransferase from Burkholderia ambifaria (strain MC40-6).